A 115-amino-acid chain; its full sequence is NADH-ubiquinone oxidoreductase chain 3 (115 aa).

The next 3 helical transmembrane spans lie at Leu-3–Trp-23, Phe-55–Leu-75, and Leu-84–Tyr-104.

The protein belongs to the complex I subunit 3 family. As to quaternary structure, core subunit of respiratory chain NADH dehydrogenase (Complex I) which is composed of 45 different subunits. Interacts with TMEM186. Interacts with TMEM242.

The protein resides in the mitochondrion inner membrane. It carries out the reaction a ubiquinone + NADH + 5 H(+)(in) = a ubiquinol + NAD(+) + 4 H(+)(out). In terms of biological role, core subunit of the mitochondrial membrane respiratory chain NADH dehydrogenase (Complex I) which catalyzes electron transfer from NADH through the respiratory chain, using ubiquinone as an electron acceptor. Essential for the catalytic activity of complex I. The polypeptide is NADH-ubiquinone oxidoreductase chain 3 (Bos indicus (Zebu)).